A 642-amino-acid polypeptide reads, in one-letter code: Threonine--tRNA ligase (642 aa).

The region spanning 1–61 (MPVITLPDGS…ETDSELSIIT (61 aa)) is the TGS domain. Residues 243 to 534 (DHRKIGKQLD…LIEEYAGKFP (292 aa)) are catalytic. Residues Cys-334, His-385, and His-511 each contribute to the Zn(2+) site.

It belongs to the class-II aminoacyl-tRNA synthetase family. Homodimer. Zn(2+) is required as a cofactor.

The protein resides in the cytoplasm. It catalyses the reaction tRNA(Thr) + L-threonine + ATP = L-threonyl-tRNA(Thr) + AMP + diphosphate + H(+). Its function is as follows. Catalyzes the attachment of threonine to tRNA(Thr) in a two-step reaction: L-threonine is first activated by ATP to form Thr-AMP and then transferred to the acceptor end of tRNA(Thr). Also edits incorrectly charged L-seryl-tRNA(Thr). The protein is Threonine--tRNA ligase of Shewanella halifaxensis (strain HAW-EB4).